The chain runs to 558 residues: Membrane protein insertase YidC (558 aa).

Helical transmembrane passes span 6–26 (VIAAISLSAAVIILYSLFFQP), 326–348 (LAIDWGFMYFITKPLFFVLDYFF), 355–377 (GLAIIAVTICIRLAFFPLANFSF), 424–444 (LPILVQIPVFFALYKVLFVTI), 469–489 (VFGLIPWDPPSFLLIGAWPII), and 512–532 (IFMFFPVFLTVILAPFPAGLV).

It belongs to the OXA1/ALB3/YidC family. Type 1 subfamily. In terms of assembly, interacts with the Sec translocase complex via SecD. Specifically interacts with transmembrane segments of nascent integral membrane proteins during membrane integration.

It is found in the cell inner membrane. Its function is as follows. Required for the insertion and/or proper folding and/or complex formation of integral membrane proteins into the membrane. Involved in integration of membrane proteins that insert both dependently and independently of the Sec translocase complex, as well as at least some lipoproteins. Aids folding of multispanning membrane proteins. This is Membrane protein insertase YidC from Pelagibacter ubique (strain HTCC1062).